The following is a 605-amino-acid chain: Alanine--tRNA ligase (605 aa).

Residues His-463, His-467, Cys-565, and His-569 each coordinate Zn(2+).

Belongs to the class-II aminoacyl-tRNA synthetase family. Zn(2+) is required as a cofactor.

Its subcellular location is the cytoplasm. It carries out the reaction tRNA(Ala) + L-alanine + ATP = L-alanyl-tRNA(Ala) + AMP + diphosphate. Functionally, catalyzes the attachment of alanine to tRNA(Ala) in a two-step reaction: alanine is first activated by ATP to form Ala-AMP and then transferred to the acceptor end of tRNA(Ala). Also edits incorrectly charged Ser-tRNA(Ala) and Gly-tRNA(Ala) via its editing domain. The sequence is that of Alanine--tRNA ligase (alaS) from Treponema pallidum (strain Nichols).